Reading from the N-terminus, the 306-residue chain is UDP-3-O-acyl-N-acetylglucosamine deacetylase (306 aa).

Residues His-79, His-239, and Asp-243 each coordinate Zn(2+). His-266 acts as the Proton donor in catalysis.

The protein belongs to the LpxC family. The cofactor is Zn(2+).

The catalysed reaction is a UDP-3-O-[(3R)-3-hydroxyacyl]-N-acetyl-alpha-D-glucosamine + H2O = a UDP-3-O-[(3R)-3-hydroxyacyl]-alpha-D-glucosamine + acetate. It participates in glycolipid biosynthesis; lipid IV(A) biosynthesis; lipid IV(A) from (3R)-3-hydroxytetradecanoyl-[acyl-carrier-protein] and UDP-N-acetyl-alpha-D-glucosamine: step 2/6. Functionally, catalyzes the hydrolysis of UDP-3-O-myristoyl-N-acetylglucosamine to form UDP-3-O-myristoylglucosamine and acetate, the committed step in lipid A biosynthesis. This Actinobacillus pleuropneumoniae serotype 7 (strain AP76) protein is UDP-3-O-acyl-N-acetylglucosamine deacetylase.